Consider the following 240-residue polypeptide: Probable septum site-determining protein MinC (240 aa).

This sequence belongs to the MinC family. Interacts with MinD and FtsZ.

Functionally, cell division inhibitor that blocks the formation of polar Z ring septums. Rapidly oscillates between the poles of the cell to destabilize FtsZ filaments that have formed before they mature into polar Z rings. Prevents FtsZ polymerization. This is Probable septum site-determining protein MinC from Buchnera aphidicola subsp. Cinara cedri (strain Cc).